The following is a 126-amino-acid chain: Small ribosomal subunit protein uS12 (126 aa).

Positions 1 to 26 are disordered; that stretch reads MPTINQLVRKGRASETTKSKSPALQD. Position 89 is a 3-methylthioaspartic acid (Asp-89). The interval 102-126 is disordered; the sequence is LDTQGVKDRRQARSKYGAKRAKAAK. Basic residues predominate over residues 113 to 126; sequence ARSKYGAKRAKAAK.

This sequence belongs to the universal ribosomal protein uS12 family. Part of the 30S ribosomal subunit. Contacts proteins S8 and S17. May interact with IF1 in the 30S initiation complex.

Its function is as follows. With S4 and S5 plays an important role in translational accuracy. Interacts with and stabilizes bases of the 16S rRNA that are involved in tRNA selection in the A site and with the mRNA backbone. Located at the interface of the 30S and 50S subunits, it traverses the body of the 30S subunit contacting proteins on the other side and probably holding the rRNA structure together. The combined cluster of proteins S8, S12 and S17 appears to hold together the shoulder and platform of the 30S subunit. The sequence is that of Small ribosomal subunit protein uS12 from Burkholderia mallei (strain ATCC 23344).